The primary structure comprises 311 residues: Pyrimidine-specific ribonucleoside hydrolase RihA (311 aa).

The active site involves H240.

The protein belongs to the IUNH family. RihA subfamily.

Hydrolyzes with equal efficiency cytidine or uridine to ribose and cytosine or uracil, respectively. This Escherichia coli O139:H28 (strain E24377A / ETEC) protein is Pyrimidine-specific ribonucleoside hydrolase RihA.